The sequence spans 338 residues: Lumican (338 aa).

The signal sequence occupies residues 1-18; sequence MNVCAFSLALALVGSVSG. Glutamine 19 bears the Pyrrolidone carboxylic acid mark. Sulfotyrosine is present on residues tyrosine 20, tyrosine 21, tyrosine 23, and tyrosine 30. An LRRNT domain is found at 28–66; that stretch reads FMYGQISPNCAPECNCPHSYPTAMYCDDLKLKSVPMVPP. 8 LRR repeats span residues 67–88, 91–114, 117–137, 138–159, 160–181, 185–205, 206–227, and 230–250; these read GIKYLYLRNNQIDHIDEKAFEN, DLQWLILDHNLLENSKIKGKVFSK, QLKKLHINYNNLTESVGPLPK, SLQDLQLTNNKISKLGSFDGLV, NLTFIYLQHNQLKEDAVSASLK, SLEYLDLSFNQMSKLPAGLPT, SLLTLYLDNNKISNIPDEYFKR, and GLQYLRLSHNELADSGVPGNS. Asparagine 88 carries N-linked (GlcNAc...) (keratan sulfate) asparagine glycosylation. Asparagine 127 carries an N-linked (GlcNAc...) (keratan sulfate) asparagine glycan. Asparagine 160 carries N-linked (GlcNAc...) (keratan sulfate) asparagine glycosylation. Asparagine 252 carries an N-linked (GlcNAc...) (keratan sulfate) asparagine glycan. LRR repeat units follow at residues 255–276 and 277–296; these read SLLELDLSYNKLKSIPTVNENL and ENYYLEVNELEKFDVKSFCK. A disulfide bridge links cysteine 295 with cysteine 328. At serine 304 the chain carries Phosphoserine. An LRR 11 repeat occupies 305 to 326; that stretch reads KIKHLRLDGNPLTQSSLPPDMY.

This sequence belongs to the small leucine-rich proteoglycan (SLRP) family. SLRP class II subfamily. Binds to laminin. Post-translationally, contains keratan sulfate. In terms of processing, cys-37, Cys-41, Cys-43 and Cys-53 are involved in disulfide bonds. Cornea and other tissues.

The protein localises to the secreted. It is found in the extracellular space. The protein resides in the extracellular matrix. The chain is Lumican (Lum) from Mus musculus (Mouse).